Consider the following 138-residue polypeptide: Large ribosomal subunit protein uL14 (138 aa).

This sequence belongs to the universal ribosomal protein uL14 family. Part of the 50S ribosomal subunit. Forms a cluster with proteins L3 and L24e, part of which may contact the 16S rRNA in 2 intersubunit bridges.

Functionally, binds to 23S rRNA. Forms part of two intersubunit bridges in the 70S ribosome. This Metallosphaera sedula (strain ATCC 51363 / DSM 5348 / JCM 9185 / NBRC 15509 / TH2) protein is Large ribosomal subunit protein uL14.